Reading from the N-terminus, the 218-residue chain is Guanylate kinase (218 aa).

The 180-residue stretch at 14-193 (GVMLVLSSPS…AFASVRAIVS (180 aa)) folds into the Guanylate kinase-like domain. Residue 21 to 28 (SPSGAGKS) participates in ATP binding.

This sequence belongs to the guanylate kinase family.

It is found in the cytoplasm. It carries out the reaction GMP + ATP = GDP + ADP. Its function is as follows. Essential for recycling GMP and indirectly, cGMP. This Chelativorans sp. (strain BNC1) protein is Guanylate kinase.